Here is a 318-residue protein sequence, read N- to C-terminus: MSLNFLDFEQPIAELDAKIEELQLVNNGQELDLDIEDQISQLREKNKEQTKKIFSNLDAWQTARVARHPQRPYSLDYIPRIFTEFDELAGDRAYANDNAIVGGTARLDGKPVMIIGHQKGRSTAEKVKRNFGMPRPEGYRKALRLMEMAERFNMPIITFIDTPGAYPGVGAEERGQSEAIARNLKVMARLSVPIICTVIGEGGSGGALAIGVGDRVNMLQYATYSVISPEGCASILWKTAEKAPTAAAAMGITAQRIKELDLINSIVEEPLGGAHRDMDVMAAHLKQAIKKDLSELEGLSKDELIEQRYDRLMSFGYC.

The CoA carboxyltransferase C-terminal domain occupies 34 to 295 (DIEDQISQLR…KQAIKKDLSE (262 aa)).

It belongs to the AccA family. As to quaternary structure, acetyl-CoA carboxylase is a heterohexamer composed of biotin carboxyl carrier protein (AccB), biotin carboxylase (AccC) and two subunits each of ACCase subunit alpha (AccA) and ACCase subunit beta (AccD).

Its subcellular location is the cytoplasm. It carries out the reaction N(6)-carboxybiotinyl-L-lysyl-[protein] + acetyl-CoA = N(6)-biotinyl-L-lysyl-[protein] + malonyl-CoA. It participates in lipid metabolism; malonyl-CoA biosynthesis; malonyl-CoA from acetyl-CoA: step 1/1. In terms of biological role, component of the acetyl coenzyme A carboxylase (ACC) complex. First, biotin carboxylase catalyzes the carboxylation of biotin on its carrier protein (BCCP) and then the CO(2) group is transferred by the carboxyltransferase to acetyl-CoA to form malonyl-CoA. This is Acetyl-coenzyme A carboxylase carboxyl transferase subunit alpha from Colwellia psychrerythraea (strain 34H / ATCC BAA-681) (Vibrio psychroerythus).